The chain runs to 201 residues: Adenylyl-sulfate kinase (201 aa).

35-42 (GLSGSGKS) provides a ligand contact to ATP. The active-site Phosphoserine intermediate is the serine 109.

It belongs to the APS kinase family.

It carries out the reaction adenosine 5'-phosphosulfate + ATP = 3'-phosphoadenylyl sulfate + ADP + H(+). The protein operates within sulfur metabolism; hydrogen sulfide biosynthesis; sulfite from sulfate: step 2/3. Functionally, catalyzes the synthesis of activated sulfate. In Enterobacter sp. (strain 638), this protein is Adenylyl-sulfate kinase.